Consider the following 526-residue polypeptide: Beta,beta-carotene 15,15'-dioxygenase (526 aa).

4 residues coordinate Fe cation: histidine 172, histidine 236, histidine 307, and histidine 512.

It belongs to the carotenoid oxygenase family. Fe(2+) is required as a cofactor.

The protein localises to the cytoplasm. The protein resides in the cytosol. It catalyses the reaction all-trans-beta-carotene + O2 = 2 all-trans-retinal. It functions in the pathway cofactor metabolism; retinol metabolism. Symmetrically cleaves beta-carotene into two molecules of retinal using a dioxygenase mechanism. This Gallus gallus (Chicken) protein is Beta,beta-carotene 15,15'-dioxygenase.